The chain runs to 474 residues: 3-isopropylmalate dehydratase large subunit (474 aa).

3 residues coordinate [4Fe-4S] cluster: cysteine 352, cysteine 413, and cysteine 416.

It belongs to the aconitase/IPM isomerase family. LeuC type 1 subfamily. Heterodimer of LeuC and LeuD. [4Fe-4S] cluster serves as cofactor.

It catalyses the reaction (2R,3S)-3-isopropylmalate = (2S)-2-isopropylmalate. The protein operates within amino-acid biosynthesis; L-leucine biosynthesis; L-leucine from 3-methyl-2-oxobutanoate: step 2/4. Functionally, catalyzes the isomerization between 2-isopropylmalate and 3-isopropylmalate, via the formation of 2-isopropylmaleate. The sequence is that of 3-isopropylmalate dehydratase large subunit from Pseudomonas syringae pv. syringae (strain B728a).